A 140-amino-acid chain; its full sequence is CDGSH iron-sulfur domain-containing protein 2 homolog (140 aa).

Topologically, residues 1–35 (MEAIAKLIKVQLPNYLQKLPVPSSLSGFAELSPSD) are lumenal. A helical transmembrane segment spans residues 36–59 (AIAVVFPFAVVSWLIGYSTYKFFQ). The Cytoplasmic portion of the chain corresponds to 60–140 (PKAVELPPSP…GPLIVKGKAN (81 aa)). The [2Fe-2S] cluster site is built by C104, C106, C115, and H119.

The protein belongs to the CISD protein family. CISD2 subfamily. [2Fe-2S] cluster serves as cofactor.

Its subcellular location is the endoplasmic reticulum membrane. The chain is CDGSH iron-sulfur domain-containing protein 2 homolog from Trichoplax adhaerens (Trichoplax reptans).